A 223-amino-acid polypeptide reads, in one-letter code: Small ribosomal subunit protein uS5 (223 aa).

A compositionally biased stretch (low complexity) spans 1–15; that stretch reads MTEAVAAEATETAPA. Positions 1–51 are disordered; it reads MTEAVAAEATETAPATDDRRGGRRGERGDRGQGRGDRGGRGGRDGGREAEK. A compositionally biased stretch (basic and acidic residues) spans 16-51; sequence TDDRRGGRRGERGDRGQGRGDRGGRGGRDGGREAEK. Residues 54-117 enclose the S5 DRBM domain; the sequence is FVERVVTINR…EEAKKSFFRV (64 aa).

Belongs to the universal ribosomal protein uS5 family. Part of the 30S ribosomal subunit. Contacts proteins S4 and S8.

In terms of biological role, with S4 and S12 plays an important role in translational accuracy. Located at the back of the 30S subunit body where it stabilizes the conformation of the head with respect to the body. In Paenarthrobacter aurescens (strain TC1), this protein is Small ribosomal subunit protein uS5.